Here is a 505-residue protein sequence, read N- to C-terminus: ATP synthase subunit beta (505 aa).

An ATP-binding site is contributed by 157-164; that stretch reads GGAGVGKT.

This sequence belongs to the ATPase alpha/beta chains family. F-type ATPases have 2 components, CF(1) - the catalytic core - and CF(0) - the membrane proton channel. CF(1) has five subunits: alpha(3), beta(3), gamma(1), delta(1), epsilon(1). CF(0) has three main subunits: a(1), b(2) and c(9-12). The alpha and beta chains form an alternating ring which encloses part of the gamma chain. CF(1) is attached to CF(0) by a central stalk formed by the gamma and epsilon chains, while a peripheral stalk is formed by the delta and b chains.

The protein localises to the cell inner membrane. The enzyme catalyses ATP + H2O + 4 H(+)(in) = ADP + phosphate + 5 H(+)(out). In terms of biological role, produces ATP from ADP in the presence of a proton gradient across the membrane. The catalytic sites are hosted primarily by the beta subunits. The chain is ATP synthase subunit beta from Bacteroides fragilis (strain ATCC 25285 / DSM 2151 / CCUG 4856 / JCM 11019 / LMG 10263 / NCTC 9343 / Onslow / VPI 2553 / EN-2).